Here is a 27-residue protein sequence, read N- to C-terminus: Trichocyst matrix protein T4-C (27 aa).

Belongs to the TMP family.

Its subcellular location is the trichocyst. In terms of biological role, structural protein that crystallize inside the trichocyst matrix. This is Trichocyst matrix protein T4-C (T4C) from Paramecium tetraurelia.